The following is a 123-amino-acid chain: Putative trans-acting factor (123 aa).

Disordered stretches follow at residues 1–38 and 100–123; these read MEAV…KQLR and VTHL…LGRP. Residues 13 to 25 show a composition bias toward polar residues; that stretch reads QVRSASRNQQRSG. Residues 26 to 38 show a composition bias toward basic and acidic residues; sequence ESTKGRKWEKQLR. Residues 106–115 are compositionally biased toward polar residues; that stretch reads RNSQGRSQGT.

The chain is Putative trans-acting factor (trans-acting factor) from Avian leukosis virus subgroup A (isolate RSA) (ALV-A RSA).